Consider the following 300-residue polypeptide: Ribosomal RNA small subunit methyltransferase H (300 aa).

Residues 33 to 35 (GGH), Asp-52, Phe-79, Asp-100, and Gln-107 contribute to the S-adenosyl-L-methionine site.

Belongs to the methyltransferase superfamily. RsmH family.

It is found in the cytoplasm. It catalyses the reaction cytidine(1402) in 16S rRNA + S-adenosyl-L-methionine = N(4)-methylcytidine(1402) in 16S rRNA + S-adenosyl-L-homocysteine + H(+). Functionally, specifically methylates the N4 position of cytidine in position 1402 (C1402) of 16S rRNA. This is Ribosomal RNA small subunit methyltransferase H from Mycoplasmopsis agalactiae (strain NCTC 10123 / CIP 59.7 / PG2) (Mycoplasma agalactiae).